A 101-amino-acid chain; its full sequence is Conantokin-L (101 aa).

The signal sequence occupies residues 1–21 (MQLYTYLYLLVPLVTFHLILG). A propeptide spanning residues 22-80 (TGTLDHGGALTERRSTDAIALKPEPVLLQKSSARSTDDNGNDRLTQMKRILKKRGNKAR) is cleaved from the precursor. Glutamate 83, glutamate 84, glutamate 91, and glutamate 95 each carry 4-carboxyglutamate. A divalent metal cation is bound by residues glutamate 91 and glutamate 95. At asparagine 99 the chain carries Asparagine amide.

It belongs to the conotoxin B superfamily. It depends on Ca(2+) as a cofactor. Mg(2+) is required as a cofactor. In terms of tissue distribution, expressed by the venom duct.

Its subcellular location is the secreted. Its function is as follows. Conantokins inhibit N-methyl-D-aspartate (NMDA) receptors. This toxin is far less potent as an anticonvulsant compound than conantokin-R. It induces sleep-like symptoms in mice. The sequence is that of Conantokin-L from Conus lynceus (Lynceus cone).